A 225-amino-acid polypeptide reads, in one-letter code: Probable GTP-binding protein EngB (225 aa).

One can recognise an EngB-type G domain in the interval 40 to 224 (GPPEVAFAGR…RAAIVHAVTA (185 aa)). Residues 48-55 (GRSNVGKS), 75-79 (GRTQE), 102-105 (DMPG), 169-172 (TKAD), and 203-205 (TSS) contribute to the GTP site. Residues S55 and T77 each contribute to the Mg(2+) site.

It belongs to the TRAFAC class TrmE-Era-EngA-EngB-Septin-like GTPase superfamily. EngB GTPase family. The cofactor is Mg(2+).

Functionally, necessary for normal cell division and for the maintenance of normal septation. The polypeptide is Probable GTP-binding protein EngB (Chelativorans sp. (strain BNC1)).